Reading from the N-terminus, the 1986-residue chain is Protein Shroom3 (1986 aa).

The interval 1–21 is disordered; the sequence is MKTPENLEEPSATPNPSRTPT. Residues 24 to 109 form the PDZ domain; that stretch reads FVYLEALLEG…TLRLVVRRDV (86 aa). 5 disordered regions span residues 152 to 199, 211 to 239, 265 to 285, 342 to 463, and 564 to 1055; these read CSEP…SSTS, RSPDQCSSQGSMESLEPSGGYPPCHLLSP, TSSSIFEYPPPGGSARERSGS, QGCA…QPLL, and NEDS…RRIF. Phosphoserine is present on Ser212. Polar residues-rich tracts occupy residues 357 to 376 and 415 to 425; these read PSPSWSQQCSGSLETATDNL and PQTNSSGSQKT. Residues 430 to 440 show a composition bias toward basic and acidic residues; the sequence is DQLHTVPERSP. Phosphoserine occurs at positions 439 and 443. The span at 595–607 shows a compositional bias: polar residues; that stretch reads ACSNHHSLSSPQA. A compositionally biased stretch (basic and acidic residues) spans 630-645; the sequence is QEDHNANLRQKVEREG. A compositionally biased stretch (polar residues) spans 653-677; it reads NSGRTRSAFSSLQNIPESLRRQSNV. Low complexity predominate over residues 747 to 761; it reads SGASQRRLSSSSSAA. The segment covering 774 to 785 has biased composition (basic and acidic residues); that stretch reads KVSRIEEREQGR. Low complexity-rich tracts occupy residues 796 to 814 and 865 to 874; these read YGPGYRPGRTGPTPSTSSS and DGRGPPARGG. Ser888 carries the post-translational modification Phosphoserine. A compositionally biased stretch (basic and acidic residues) spans 895 to 908; it reads EAEREASWSEDRPG. Position 909 is a phosphothreonine (Thr909). 2 positions are modified to phosphoserine: Ser912 and Ser969. The region spanning 927–1023 is the ASD1 domain; sequence IKDAQSRVLG…SEPEKMNEVG (97 aa). A compositionally biased stretch (basic and acidic residues) spans 1004–1020; it reads LTVEQKKRSYSEPEKMN. Phosphoserine is present on residues Ser1063 and Ser1066. 4 disordered regions span residues 1083–1102, 1107–1223, 1304–1425, and 1446–1654; these read YIQRKTGKRPTGAACTPEAG, AQSA…AEDL, ATVA…PPWV, and ANLK…KTSE. Positions 1114–1127 are enriched in low complexity; the sequence is AGPAAPDGPGLASA. Basic and acidic residues predominate over residues 1134-1146; sequence REPEALPRKEHTH. Residues Trp1175, Val1179, and Ser1219 each carry the phosphoserine modification. Low complexity predominate over residues 1307–1318; sequence ASSAPPESSGAA. Residues Ser1350 and Ser1354 each carry the phosphoserine modification. Residues 1366-1399 show a composition bias toward polar residues; the sequence is YRSQLAMDQQTGQQPPSSPASAVTQPTSPRSPEL. The span at 1455–1469 shows a compositional bias: low complexity; it reads PSRPSSCSTSDPDTP. Residues 1513–1524 show a composition bias toward pro residues; the sequence is LPPPPPPSPPSE. Positions 1581-1630 are enriched in polar residues; that stretch reads EGSQIMTATPPQTSAKGSEAESNTPSSASAQPQLNGSPGKQLCPSQTRNL. The span at 1634-1654 shows a compositional bias: basic and acidic residues; the sequence is PVERTQDLGKKTHAEPQKTSE. The region spanning 1659–1947 is the ASD2 domain; the sequence is EALAKEIVHQ…QVRCLLESLP (289 aa). The stretch at 1844–1890 forms a coiled coil; it reads RLARVENVLRGLGEDASKEERSSLNEKRKVLAGQHEDARELKENLDR.

Belongs to the shroom family. In terms of assembly, interacts with F-actin. Interacts with ROCK1.

The protein localises to the cell junction. The protein resides in the adherens junction. It is found in the cytoplasm. Its subcellular location is the cytoskeleton. It localises to the apical cell membrane. Functionally, controls cell shape changes in the neuroepithelium during neural tube closure. Induces apical constriction in epithelial cells by promoting the apical accumulation of F-actin and myosin II, and probably by bundling stress fibers. Induces apicobasal cell elongation by redistributing gamma-tubulin and directing the assembly of robust apicobasal microtubule arrays. The chain is Protein Shroom3 (Shroom3) from Mus musculus (Mouse).